The chain runs to 323 residues: MTSVVSSARRTIRIGSRKSQLALVQTYWVREQLQNSFPDINFEVHTMSTQGDKILDVALAKIGDKGLFTKELEVGMINEEIDFAVHSLKDLPTNLPEGLALAAITERENPADALVVHENFKDKQIDTLPAGAVIGTSSLRRLAQLRNQFPHLTFKDVRGNLNTRLAKLDAGEYDGLILAAAGLQRLGMGDRVHQILPKEISLHAVGQGALGIECRADDAELITVLKAIEHPETRDRCLAERSFLRSLEGGCQVPIGVNTEINGNELILTGVVASVDGQNLVKDTVSGNASDAEAIGIRLAELLREQGAQEILNTIFAEIQRGS.

Cys251 carries the S-(dipyrrolylmethanemethyl)cysteine modification.

This sequence belongs to the HMBS family. As to quaternary structure, monomer. It depends on dipyrromethane as a cofactor.

It catalyses the reaction 4 porphobilinogen + H2O = hydroxymethylbilane + 4 NH4(+). It functions in the pathway porphyrin-containing compound metabolism; protoporphyrin-IX biosynthesis; coproporphyrinogen-III from 5-aminolevulinate: step 2/4. The protein operates within porphyrin-containing compound metabolism; chlorophyll biosynthesis. In terms of biological role, tetrapolymerization of the monopyrrole PBG into the hydroxymethylbilane pre-uroporphyrinogen in several discrete steps. The polypeptide is Porphobilinogen deaminase (hemC) (Nostoc sp. (strain PCC 7120 / SAG 25.82 / UTEX 2576)).